A 127-amino-acid chain; its full sequence is Vacuolar ATPase assembly integral membrane protein VMA21 (127 aa).

The disordered stretch occupies residues 1-28 (MATRRNPTKESITTSPPPDQQPRQPGEL). The Cytoplasmic segment spans residues 1-45 (MATRRNPTKESITTSPPPDQQPRQPGELEHREAIQLRDLPGYPQQ). Residues 46–66 (VLWKLIIYSIAVLVLPLSAYF) form a helical membrane-spanning segment. Over 67-79 (YSVNYVFDGNTTY) the chain is Lumenal. A helical transmembrane segment spans residues 80–100 (AGATAAITANLILFSYIVVAM). Topologically, residues 101 to 127 (REDKGDQEQLREQQQLRGNKEETKKMK) are cytoplasmic. The tract at residues 107-127 (QEQLREQQQLRGNKEETKKMK) is disordered. Residues 118-127 (GNKEETKKMK) show a composition bias toward basic and acidic residues. The Prevents secretion from ER signature appears at 124–127 (KKMK).

This sequence belongs to the VMA21 family.

It is found in the endoplasmic reticulum membrane. It localises to the endoplasmic reticulum-Golgi intermediate compartment membrane. The protein localises to the cytoplasmic vesicle. Its subcellular location is the COPII-coated vesicle membrane. Functionally, required for the assembly of the V0 complex of the vacuolar ATPase (V-ATPase) in the endoplasmic reticulum. This chain is Vacuolar ATPase assembly integral membrane protein VMA21, found in Coccidioides immitis (strain RS) (Valley fever fungus).